Here is a 475-residue protein sequence, read N- to C-terminus: Adenosylhomocysteinase (475 aa).

3 residues coordinate substrate: threonine 61, aspartate 140, and glutamate 200. 201-203 (TTT) provides a ligand contact to NAD(+). Positions 230 and 234 each coordinate substrate. NAD(+) contacts are provided by residues asparagine 235, 264-269 (GYGDVG), glutamate 287, asparagine 322, 343-345 (IGH), and asparagine 388.

This sequence belongs to the adenosylhomocysteinase family. The cofactor is NAD(+).

The protein localises to the cytoplasm. It catalyses the reaction S-adenosyl-L-homocysteine + H2O = L-homocysteine + adenosine. The protein operates within amino-acid biosynthesis; L-homocysteine biosynthesis; L-homocysteine from S-adenosyl-L-homocysteine: step 1/1. In terms of biological role, may play a key role in the regulation of the intracellular concentration of adenosylhomocysteine. The sequence is that of Adenosylhomocysteinase from Paracidovorax citrulli (strain AAC00-1) (Acidovorax citrulli).